A 414-amino-acid polypeptide reads, in one-letter code: Solute carrier family 25 member 46-B (414 aa).

Basic and acidic residues predominate over residues 1 to 13 (MQPRRPDRFDGLE). The disordered stretch occupies residues 1-89 (MQPRRPDRFD…AFGEENSGSS (89 aa)). Residues 29–50 (YQSSFPARSLSSSGDLSQQWVT) are compositionally biased toward polar residues. The stretch at 92–183 (QVNRFAGFGI…GMLSEFTHLP (92 aa)) is one Solcar 1 repeat. 6 helical membrane passes run 99 to 119 (FGIG…CIVL), 159 to 179 (MGST…LSEF), 198 to 218 (HLLL…ASLI), 254 to 274 (LLPL…HYII), 310 to 330 (FPEL…LYPL), and 379 to 399 (LGFY…AIVL). The Solcar 2 repeat unit spans residues 307–412 (EDYFPELLAN…KIIYSSVVQT (106 aa)).

This sequence belongs to the mitochondrial carrier (TC 2.A.29) family.

The protein localises to the mitochondrion outer membrane. In terms of biological role, may play a role in mitochondrial dynamics by controlling mitochondrial membrane fission. In Xenopus laevis (African clawed frog), this protein is Solute carrier family 25 member 46-B (slc25a46-b).